A 206-amino-acid chain; its full sequence is Putative transporter protein AmiS2 (206 aa).

7 helical membrane passes run 4–24 (VGLLYVGAVLFVNGLMLLGTV), 29–49 (ASVLNLFVGALQCVVPTVMLI), 56–76 (SAVLAASGLYLFGFTYLYVGI), 86–106 (GIGWFSLFVACAALVYSFLSF), 113–133 (VFGVIWLAWAALWTLFFLVLG), 142–162 (FTGWAAILLSQPTCTVPAFLI), and 173–193 (VAAGWAGALLVLLGLAKILAA).

It belongs to the AmiS/UreI family.

It is found in the cell membrane. Possible transporter that might be responsible for the adsorption of amidase substrates or release of their hydrolysis products. The protein is Putative transporter protein AmiS2 (amiS2) of Rhodococcus erythropolis (Arthrobacter picolinophilus).